We begin with the raw amino-acid sequence, 402 residues long: tRNA pseudouridine synthase Pus10 (402 aa).

D215 functions as the Nucleophile in the catalytic mechanism. A disordered region spans residues 370–402 (ERGGHPGARGGTRRRPRKGPARPAGGRDRPRKT). Positions 380–389 (GTRRRPRKGP) are enriched in basic residues.

This sequence belongs to the pseudouridine synthase Pus10 family.

It catalyses the reaction uridine(54) in tRNA = pseudouridine(54) in tRNA. It carries out the reaction uridine(55) in tRNA = pseudouridine(55) in tRNA. Functionally, responsible for synthesis of pseudouridine from uracil-54 and uracil-55 in the psi GC loop of transfer RNAs. The protein is tRNA pseudouridine synthase Pus10 of Cenarchaeum symbiosum (strain A).